Consider the following 1032-residue polypeptide: MGRESRHYRKRSASRGRSGSRSRSRSPSDKRSKRGDDRRSRSRDRDRRRERSRSRDKRRSRSRDRKRLRRSRSRERDRSRERRRSRSRDRRRSRSRSRGRRSRSSSPGNKSKKTENRSRSKEKTDGGESSKEKKKDKDDKEDEKEKDAGNFDQNKLEEEMRKRKERVEKWREEQRKKAMENIGELKKEIEEMKQGKKWSLEDDDDDEDDPAEAEKEGNEMEGEELDPLDAYMEEVKEEVKKFNMRSVKGGGGNEKKSGPTVTKVVTVVTTKKAVVDSDKKKGELMENDQDAMEYSSEEEEVDLQTALTGYQTKQRKLLEPVDHGKIEYEPFRKNFYVEVPELAKMSQEEVNVFRLEMEGITVKGKGCPKPIKSWVQCGISMKILNSLKKHGYEKPTPIQTQAIPAIMSGRDLIGIAKTGSGKTIAFLLPMFRHIMDQRSLEEGEGPIAVIMTPTRELALQITKECKKFSKTLGLRVVCVYGGTGISEQIAELKRGAEIIVCTPGRMIDMLAANSGRVTNLRRVTYVVLDEADRMFDMGFEPQVMRIVDNVRPDRQTVMFSATFPRAMEALVRRILSKPIEVQVGGRSVVCSDVEQQVIVIEEEKKFLKLLELLGHYQESGSVIIFVDKQEHADGLLKDLMRASYPCMSLHGGIDQYDRDSIINDFKNGTCKLLVATSVAARGLDVKHLILVVNYSCPNHYEDYVHRAGRTGRAGNKGYAYTFITEDQARYAGDIIKALELSGTAVPPDLEKLWSDFKDQQKAEGKIIKKSSGFSGKGFKFDETEQALANERKKLQKAALGLQDSDDEDAAVDIDEQIESMFNSKKRVKDMAAPGTSSAPAPTAGNAEKLEIAKRLALRINAQKNLGIESQVDVMQQATNAILRGGTILAPTVSAKTIAEQLAEKINAKLNYVPLEKQEEERQDGGQNESFKRYEEELEINDFPQTARWKVTSKEALQRISEYSEAAITIRGTYFPPGKEPKEGERKIYLAIESANELAVQKAKAEITRLIKEELIRLQNSYQPTNKGRYKVL.

Positions Met1–Ser24 are enriched in basic residues. Residues Met1–Leu228 form a disordered region. Gly2 is lipidated: N-myristoyl glycine. The span at Ser26 to Arg49 shows a compositional bias: basic and acidic residues. 2 stretches are compositionally biased toward basic residues: residues Glu50–Ser73 and Glu81–Arg103. The segment covering Lys112–Leu200 has biased composition (basic and acidic residues). Residues Asp152 to Lys197 are a coiled coil. Lys186 is covalently cross-linked (Glycyl lysine isopeptide (Lys-Gly) (interchain with G-Cter in SUMO2)). The residue at position 199 (Ser199) is a Phosphoserine. 2 stretches are compositionally biased toward acidic residues: residues Glu201 to Ala211 and Glu219 to Leu228. Lys263 is subject to N6-acetyllysine. Tyr294 is subject to Phosphotyrosine. Phosphoserine is present on residues Ser295 and Ser296. Residue Lys325 forms a Glycyl lysine isopeptide (Lys-Gly) (interchain with G-Cter in SUMO2) linkage. Ser346 bears the Phosphoserine mark. The Q motif signature appears at Lys372–Thr400. The region spanning Ile403 to Val581 is the Helicase ATP-binding domain. Ala416–Thr423 contacts ATP. Residues Asp529–Asp532 carry the DEAD box motif. The region spanning Asp592–Trp753 is the Helicase C-terminal domain. Lys776 is modified (N6-acetyllysine). Residue Lys779 forms a Glycyl lysine isopeptide (Lys-Gly) (interchain with G-Cter in SUMO2) linkage. Ser804 carries the phosphoserine modification. Lys904 carries the post-translational modification N6-acetyllysine. Glycyl lysine isopeptide (Lys-Gly) (interchain with G-Cter in SUMO2) cross-links involve residues Lys908 and Lys916. Phosphoserine is present on Ser929.

It belongs to the DEAD box helicase family. DDX46/PRP5 subfamily. In terms of assembly, component of the 17S U2 SnRNP complex, a ribonucleoprotein complex that contains small nuclear RNA (snRNA) U2 and a number of specific proteins. Within the 17S U2 SnRNP complex, DDX46 is part of the SF3B subcomplex, which is required for 'A' complex assembly formed by the stable binding of U2 snRNP to the branchpoint sequence in pre-mRNA. Recruited to the 17S U2 SnRNP complex following release of DDX42; DDX42 and DDX46 bind the SF3B subcomplex in a competitive manner.

It localises to the nucleus speckle. The protein localises to the nucleus. The protein resides in the cajal body. The catalysed reaction is ATP + H2O = ADP + phosphate + H(+). In terms of biological role, component of the 17S U2 SnRNP complex of the spliceosome, a large ribonucleoprotein complex that removes introns from transcribed pre-mRNAs. The 17S U2 SnRNP complex (1) directly participates in early spliceosome assembly and (2) mediates recognition of the intron branch site during pre-mRNA splicing by promoting the selection of the pre-mRNA branch-site adenosine, the nucleophile for the first step of splicing. Within the 17S U2 SnRNP complex, DDX46 plays essential roles during assembly of pre-spliceosome and proofreading of the branch site. The protein is Probable ATP-dependent RNA helicase DDX46 (DDX46) of Pongo abelii (Sumatran orangutan).